The primary structure comprises 90 residues: DNA-directed RNA polymerase subunit omega (90 aa).

Belongs to the RNA polymerase subunit omega family. The RNAP catalytic core consists of 2 alpha, 1 beta, 1 beta' and 1 omega subunit. When a sigma factor is associated with the core the holoenzyme is formed, which can initiate transcription.

The catalysed reaction is RNA(n) + a ribonucleoside 5'-triphosphate = RNA(n+1) + diphosphate. In terms of biological role, promotes RNA polymerase assembly. Latches the N- and C-terminal regions of the beta' subunit thereby facilitating its interaction with the beta and alpha subunits. This Hamiltonella defensa subsp. Acyrthosiphon pisum (strain 5AT) protein is DNA-directed RNA polymerase subunit omega.